A 300-amino-acid chain; its full sequence is Histone deacetylase HDT3 (300 aa).

Residues 98 to 112 (EDEMDLDSEDEDEEL) show a composition bias toward acidic residues. The disordered stretch occupies residues 98 to 300 (EDEMDLDSED…AHSKAKHGGK (203 aa)). Over residues 119–132 (ENGKADEKKQKSQE) the composition is skewed to basic and acidic residues. The span at 151 to 197 (DDDSDEDETDDSDEDETDDSDEGLSPEEGDDDSSDEDDTSDDEEEDT) shows a compositional bias: acidic residues. Residues 198–211 (PTPKKPEVGKKRAA) are compositionally biased toward basic and acidic residues. The span at 265–275 (SPKSAPKSGVP) shows a compositional bias: low complexity. Residues 274–297 (VPCKSCSKSFISETAPQAHSKAKH) form a C2H2-type zinc finger. Polar residues predominate over residues 279-290 (CSKSFISETAPQ).

This sequence belongs to the histone deacetylase HD2 family. As to quaternary structure, multimer. Possibly forms a homotrimer with HDT1 and/or HDT2.

The protein localises to the nucleus. Its subcellular location is the nucleolus. Mediates the deacetylation of lysine residues on the N-terminal part of the core histones (H2A, H2B, H3 and H4). Histone deacetylation gives a tag for epigenetic repression and plays an important role in transcriptional regulation, cell cycle progression and developmental events. The protein is Histone deacetylase HDT3 (HDT3) of Zea mays (Maize).